A 257-amino-acid chain; its full sequence is Hydroxyacylglutathione hydrolase (257 aa).

Histidine 55, histidine 57, aspartate 59, histidine 60, histidine 112, aspartate 129, and histidine 167 together coordinate Zn(2+).

It belongs to the metallo-beta-lactamase superfamily. Glyoxalase II family. As to quaternary structure, monomer. Zn(2+) is required as a cofactor.

The catalysed reaction is an S-(2-hydroxyacyl)glutathione + H2O = a 2-hydroxy carboxylate + glutathione + H(+). It functions in the pathway secondary metabolite metabolism; methylglyoxal degradation; (R)-lactate from methylglyoxal: step 2/2. Functionally, thiolesterase that catalyzes the hydrolysis of S-D-lactoyl-glutathione to form glutathione and D-lactic acid. This Pseudoalteromonas translucida (strain TAC 125) protein is Hydroxyacylglutathione hydrolase.